A 139-amino-acid polypeptide reads, in one-letter code: Plastocyanin (139 aa).

The first 34 residues, 1–34 (MKLIAQISRSLSLALFALVLMVGSFVAVMSPAAA), serve as a signal peptide directing secretion. The Plastocyanin-like domain occupies 35–139 (ETFTVKMGAD…GMVGKITVEG (105 aa)). His-73, Cys-123, His-126, and Met-131 together coordinate Cu cation.

Belongs to the plastocyanin family. It depends on Cu(2+) as a cofactor.

The protein resides in the cellular thylakoid membrane. Participates in electron transfer between P700 and the cytochrome b6-f complex in photosystem I. In Leptolyngbya laminosa (Phormidium laminosum), this protein is Plastocyanin (petE).